Reading from the N-terminus, the 128-residue chain is Large ribosomal subunit protein eL8 (128 aa).

It belongs to the eukaryotic ribosomal protein eL8 family. Part of the 50S ribosomal subunit. Probably part of the RNase P complex.

The protein resides in the cytoplasm. Multifunctional RNA-binding protein that recognizes the K-turn motif in ribosomal RNA, the RNA component of RNase P, box H/ACA, box C/D and box C'/D' sRNAs. In Nitrosopumilus maritimus (strain SCM1), this protein is Large ribosomal subunit protein eL8.